The primary structure comprises 356 residues: Golgi-resident adenosine 3',5'-bisphosphate 3'-phosphatase (356 aa).

Met-1 is subject to N-acetylmethionine. At 1–12 the chain is on the cytoplasmic side; that stretch reads MAPMGIRLSPLG. A helical membrane pass occupies residues 13–33; that stretch reads VAVFFLLGLGVLYHLYSGFLA. The Lumenal portion of the chain corresponds to 34–356; the sequence is GRFSLFGLGG…KLPDLEKSGH (323 aa). Residues 82-104 form a disordered region; sequence VRESNVLHEKSKGKTREGAEDKM. The Proton acceptor role is filled by Asp-108. Residues Glu-131, Asp-172, Leu-174, and Asp-175 each coordinate Mg(2+). Thr-177 (proton acceptor) is an active-site residue. Positions 240 and 243 each coordinate AMP. N-linked (GlcNAc...) asparagine glycosylation is present at Asn-257. Residues Gly-266 and Lys-270 each coordinate AMP. Residue Asp-298 coordinates Mg(2+).

Belongs to the inositol monophosphatase superfamily. The cofactor is Mg(2+). Contains N-linked glycan resistant to endoglycosydase H.

Its subcellular location is the golgi apparatus. The protein resides in the trans-Golgi network membrane. It catalyses the reaction adenosine 3',5'-bisphosphate + H2O = AMP + phosphate. It participates in sulfur metabolism. Strongly inhibited by lithium. Exhibits 3'-nucleotidase activity toward adenosine 3',5'-bisphosphate (PAP), namely hydrolyzes adenosine 3',5'-bisphosphate into adenosine 5'-monophosphate (AMP) and a phosphate. May play a role in the formation of skeletal elements derived through endochondral ossification, possibly by clearing adenosine 3',5'-bisphosphate produced by Golgi sulfotransferases during glycosaminoglycan sulfation. Has no activity toward 3'-phosphoadenosine 5'-phosphosulfate (PAPS) or inositol phosphate (IP) substrates including I(1)P, I(1,4)P2, I(1,3,4)P3, I(1,4,5)P3 and I(1,3,4,5)P4. This Rattus norvegicus (Rat) protein is Golgi-resident adenosine 3',5'-bisphosphate 3'-phosphatase (Bpnt2).